Here is a 390-residue protein sequence, read N- to C-terminus: MQAVGIITEYNPFHNGHIYHIQQAKKLTGADVVVAVMSGNFVQRGEPALFDKWQRTQMALENGVDLVIELPTFFAVQPSHIFADGAIQLLSALGVDNIVFGSEHPEVDFLSIAKQAPTIAEGQEFKNHTQTFASAYAKQLEAETSFKLEEPNDILALGYASAILNQQANIGIIPIQRAEANYHDANFTDEQSIASASSIRLALHKGKTEKIKNVVPEATKVALDTAANTIDFESKFWSMLKYRLTTDTVGQLGQIYQMAEGLEHRFAKTALNDSGPQSYQSFIKSTKSKRYTFTRIQRTLLYTLLNIKVDQMQAAMQDPYLRILGFTSTGQQYLNEIKKQVTLPLISKVDSSLAKSNLRLDYKAGKVWQLLANEGAPTQDVTRMPLYWEK.

ATP-binding positions include 7-20 (ITEY…HIYH), G101, N152, and R177.

It belongs to the TmcAL family.

The protein resides in the cytoplasm. It carries out the reaction cytidine(34) in elongator tRNA(Met) + acetate + ATP = N(4)-acetylcytidine(34) in elongator tRNA(Met) + AMP + diphosphate. Catalyzes the formation of N(4)-acetylcytidine (ac(4)C) at the wobble position of elongator tRNA(Met), using acetate and ATP as substrates. First activates an acetate ion to form acetyladenylate (Ac-AMP) and then transfers the acetyl group to tRNA to form ac(4)C34. This Leuconostoc mesenteroides subsp. mesenteroides (strain ATCC 8293 / DSM 20343 / BCRC 11652 / CCM 1803 / JCM 6124 / NCDO 523 / NBRC 100496 / NCIMB 8023 / NCTC 12954 / NRRL B-1118 / 37Y) protein is tRNA(Met) cytidine acetate ligase.